Reading from the N-terminus, the 400-residue chain is Endoglucanase A (400 aa).

The first 32 residues, 1-32, serve as a signal peptide directing secretion; sequence MTKTFKKFSIAGLALLFMATAAFAGWSTKASA. Catalysis depends on glutamate 187, which acts as the Proton donor. The active-site Nucleophile is glutamate 328.

This sequence belongs to the glycosyl hydrolase 5 (cellulase A) family.

The protein localises to the secreted. It catalyses the reaction Endohydrolysis of (1-&gt;4)-beta-D-glucosidic linkages in cellulose, lichenin and cereal beta-D-glucans.. With respect to regulation, strongly inhibited by Hg(2+), Ag(+) and Fe(3+). To a lesser extent, is also inhibited by Pb(2+), Mn(2+), Sn(2+) and Cu(2+). By contrast, Ni(2+), Zn(2+), Co(2+), Ba(2+) and NH(4)(+) do not affect enzyme activity, while 10 mM Ca(2+), and Mg(2+) produce a stimulating effect. Is also strongly inhibited by chemicals such as N-bromosuccinimide and dimethyl(2-dihydroxy-5-nitrobenzyl)sulphonium bromide. Is not affected by N-acetylimidazole. In terms of biological role, endoglucanase with high activity on carboxymethylcellulose (CMC) and lichenan, but not active on Avicel. This chain is Endoglucanase A (celA), found in Paenibacillus barcinonensis.